We begin with the raw amino-acid sequence, 396 residues long: Methionine import ATP-binding protein MetN 2 (396 aa).

The region spanning 41-280 (VSFELVGKVF…PRHGATRALL (240 aa)) is the ABC transporter domain. An ATP-binding site is contributed by 77-84 (GRSGAGKS).

It belongs to the ABC transporter superfamily. Methionine importer (TC 3.A.1.24) family. As to quaternary structure, the complex is composed of two ATP-binding proteins (MetN), two transmembrane proteins (MetI) and a solute-binding protein (MetQ).

It is found in the cell inner membrane. The catalysed reaction is L-methionine(out) + ATP + H2O = L-methionine(in) + ADP + phosphate + H(+). It carries out the reaction D-methionine(out) + ATP + H2O = D-methionine(in) + ADP + phosphate + H(+). Part of the ABC transporter complex MetNIQ involved in methionine import. Responsible for energy coupling to the transport system. In Burkholderia pseudomallei (strain K96243), this protein is Methionine import ATP-binding protein MetN 2.